We begin with the raw amino-acid sequence, 139 residues long: Ribosomal RNA large subunit methyltransferase H (139 aa).

Residues leucine 56, glycine 88, and leucine 107–phenylalanine 112 contribute to the S-adenosyl-L-methionine site.

This sequence belongs to the RNA methyltransferase RlmH family. Homodimer.

It localises to the cytoplasm. It carries out the reaction pseudouridine(1915) in 23S rRNA + S-adenosyl-L-methionine = N(3)-methylpseudouridine(1915) in 23S rRNA + S-adenosyl-L-homocysteine + H(+). Functionally, specifically methylates the pseudouridine at position 1915 (m3Psi1915) in 23S rRNA. This chain is Ribosomal RNA large subunit methyltransferase H, found in Coprothermobacter proteolyticus (strain ATCC 35245 / DSM 5265 / OCM 4 / BT).